A 382-amino-acid polypeptide reads, in one-letter code: tRNA-queuosine alpha-mannosyltransferase (382 aa).

Belongs to the glycosyltransferase group 1 family. Glycosyltransferase 4 subfamily.

It is found in the cytoplasm. It localises to the nucleus. It carries out the reaction queuosine(34) in tRNA(Asp) + GDP-alpha-D-mannose = O-4''-alpha-D-mannosylqueuosine(34) in tRNA(Asp) + GDP + H(+). In terms of biological role, glycosyltransferase that specifically catalyzes mannosylation of cytoplasmic tRNA(Asp) modified with queuosine at position 34 (queuosine(34)). Mannosylates the cyclopentene moiety of queuosine(34) in tRNA(Asp) to form mannosyl-queuosine(34). Mannosylation of queuosine(34) in tRNA(Asp) is required to slow-down elongation at cognate codons, GAC and GAU, thereby regulating protein translation. This is tRNA-queuosine alpha-mannosyltransferase (GTDC1) from Gallus gallus (Chicken).